We begin with the raw amino-acid sequence, 293 residues long: UPF0282 protein MK0213 (293 aa).

It belongs to the UPF0282 family.

The protein is UPF0282 protein MK0213 of Methanopyrus kandleri (strain AV19 / DSM 6324 / JCM 9639 / NBRC 100938).